Here is a 439-residue protein sequence, read N- to C-terminus: Deacetylvindoline O-acetyltransferase (439 aa).

His-158 (proton acceptor) is an active-site residue. Positions 317–344 (TKLVINELRKEKQKIKNLSREKLTYVAQ) form a coiled coil. Residue Asp-380 is the Proton acceptor of the active site.

It belongs to the plant acyltransferase family. Monomer. Predominantly expressed in young leaves of mature plants. Low expression in stems and flowers and not detected in roots. Confined to the laticifer and idioblast cells of leaves, stems, and flower buds.

The protein localises to the cytoplasm. It is found in the nucleus. It catalyses the reaction 4-O-deacetylvindoline + acetyl-CoA = vindoline + CoA. Its pathway is alkaloid biosynthesis; vindoline biosynthesis. Its function is as follows. Involved in the biosynthesis of vindoline, a precursor of vinblastine and vincristine. This chain is Deacetylvindoline O-acetyltransferase, found in Catharanthus roseus (Madagascar periwinkle).